Reading from the N-terminus, the 215-residue chain is UPF0502 protein YceH (215 aa).

Residue Lys80 is modified to N6-acetyllysine.

It belongs to the UPF0502 family.

This is UPF0502 protein YceH from Escherichia fergusonii (strain ATCC 35469 / DSM 13698 / CCUG 18766 / IAM 14443 / JCM 21226 / LMG 7866 / NBRC 102419 / NCTC 12128 / CDC 0568-73).